The sequence spans 157 residues: UPF0225 protein PSPPH_1399 (157 aa).

The protein belongs to the UPF0225 family.

The protein is UPF0225 protein PSPPH_1399 of Pseudomonas savastanoi pv. phaseolicola (strain 1448A / Race 6) (Pseudomonas syringae pv. phaseolicola (strain 1448A / Race 6)).